A 486-amino-acid chain; its full sequence is Argininosuccinate lyase (486 aa).

It belongs to the lyase 1 family. Argininosuccinate lyase subfamily.

Its subcellular location is the cytoplasm. It carries out the reaction 2-(N(omega)-L-arginino)succinate = fumarate + L-arginine. The protein operates within amino-acid biosynthesis; L-arginine biosynthesis; L-arginine from L-ornithine and carbamoyl phosphate: step 3/3. The protein is Argininosuccinate lyase of Acidovorax ebreus (strain TPSY) (Diaphorobacter sp. (strain TPSY)).